A 782-amino-acid chain; its full sequence is E3 ubiquitin-protein ligase SopA (782 aa).

Residues 140–170 (SANNRPTVSEGRTPPVSPSLSLQATSSPSSP) are disordered. The span at 157 to 170 (PSLSLQATSSPSSP) shows a compositional bias: low complexity. Cysteine 753 acts as the Glycyl thioester intermediate in catalysis.

It belongs to the SopA E3 ligase family. In terms of processing, ubiquitinated in the presence of host E1 ubiquitin-activating enzyme, E2 ubiquitin-conjugating enzyme and ubiquitin.

It localises to the secreted. Its subcellular location is the host cell. It carries out the reaction S-ubiquitinyl-[E2 ubiquitin-conjugating enzyme]-L-cysteine + [acceptor protein]-L-lysine = [E2 ubiquitin-conjugating enzyme]-L-cysteine + N(6)-ubiquitinyl-[acceptor protein]-L-lysine.. In terms of biological role, effector proteins function to alter host cell physiology and promote bacterial survival in host tissues. This protein is an E3 ubiquitin ligase that interferes with host's ubiquitination pathway. The sequence is that of E3 ubiquitin-protein ligase SopA (sopA) from Salmonella agona (strain SL483).